The primary structure comprises 170 residues: Transmembrane protein 252 (170 aa).

Transmembrane regions (helical) follow at residues 8–28 (ILCA…AFFI) and 40–60 (LIAA…GIFW). The tract at residues 112-147 (CPAEREASGIPPPLYTETGLEFQDGNDSHPEAPPSY) is disordered.

It localises to the membrane. The chain is Transmembrane protein 252 (TMEM252) from Homo sapiens (Human).